The sequence spans 597 residues: Elongation factor 4 (597 aa).

The tr-type G domain maps to 2 to 184 (DHIRNFSIIA…SLIAKVPPPK (183 aa)). GTP-binding positions include 14-19 (DHGKST) and 131-134 (NKID).

Belongs to the TRAFAC class translation factor GTPase superfamily. Classic translation factor GTPase family. LepA subfamily.

It is found in the cell inner membrane. It catalyses the reaction GTP + H2O = GDP + phosphate + H(+). Its function is as follows. Required for accurate and efficient protein synthesis under certain stress conditions. May act as a fidelity factor of the translation reaction, by catalyzing a one-codon backward translocation of tRNAs on improperly translocated ribosomes. Back-translocation proceeds from a post-translocation (POST) complex to a pre-translocation (PRE) complex, thus giving elongation factor G a second chance to translocate the tRNAs correctly. Binds to ribosomes in a GTP-dependent manner. The polypeptide is Elongation factor 4 (Burkholderia ambifaria (strain MC40-6)).